We begin with the raw amino-acid sequence, 422 residues long: MNKDKFHVIIVGGSIAGLTLAHCLHRAGISHVVLEKASEPAPQIGASVGILPNGARVLDQLQLYETIEKYIEPLETATIGYPDGFSFSSSYPKLVNERFGFPIAFLDRQKLLEILYQHYPDKSKIRLAARVISIESSAIDSEVTTEDGTIYKGHLIVGADGVHSRVRSEMWKAAQRIKPGLVTKREQRSMTVEYSCIFGISAPIKGLIVGEQVNAFFDHLTIVTIHGKNGRVYWFLIQKLDRKYIYPECPRFTAKEIGPIASDLKEVKFFKDITFGQLWDSRETASMTVLEENVFDTWYHGRMVLMGDSVHKMTPNIGQGANMAIEDAAVLSSLLSDLLQKQTQPPTNAQIERLLAQYREVRYPRVNSIYKTSRFLVRFQARDGIFNTLFGRYYAPHAGDLPADMASKTIAGGELISWMAYM.

The helical transmembrane segment at 8-24 threads the bilayer; that stretch reads VIIVGGSIAGLTLAHCL. FAD contacts are provided by Glu35, Gly49, Arg108, Asp308, and Ala321.

Belongs to the paxM FAD-dependent monooxygenase family. It depends on FAD as a cofactor.

The protein resides in the membrane. The protein operates within secondary metabolite biosynthesis. Functionally, FAD-dependent monooxygenase; part of the gene cluster that mediates the biosynthesis of the indole diterpenes penitrems. The geranylgeranyl diphosphate (GGPP) synthase ptmG catalyzes the first step in penitrem biosynthesis via conversion of farnesyl pyrophosphate and isopentyl pyrophosphate into geranylgeranyl pyrophosphate (GGPP). Condensation of indole-3-glycerol phosphate with GGPP by the prenyl transferase ptmC then forms 3-geranylgeranylindole (3-GGI). Epoxidation by the FAD-dependent monooxygenase ptmM leads to a epoxidized-GGI that is substrate of the terpene cyclase ptmB for cyclization to yield paspaline. Paspaline is subsequently converted to 13-desoxypaxilline by the cytochrome P450 monooxygenase ptmP, the latter being then converted to paxilline by the cytochrome P450 monooxygenase ptmQ. Paxilline is converted to beta-paxitriol via C-10 ketoreduction by the short-chain dehydrogenase ptmH which can be monoprenylated at the C-20 by the indole diterpene prenyltransferase ptmD. A two-step elimination (acetylation and elimination) process performed by the O-acetyltransferase ptmV and ptmI leads to the production of the prenylated form of penijanthine. The FAD-linked oxidoreductase ptmO then converts the prenylated form of penijanthine into PC-M5 which is in turn transformed into PC-M4 by the aromatic dimethylallyltransferase ptmE. Five sequential oxidative transformations performed by the cytochrome P450 monooxygenases ptmK, ptmU, ptmL, ptmN and ptmJ yield the various penitrem compounds. PtmK, ptmU and ptmM are involved in the formation of the key bicyclic ring of penitrem C via the formation of the intermediates secopenitrem D and penitrem D. PtmL catalyzes the epoxidation of penitrem D and C to yield penitrem B and F, respectively. PtmJ catalyzes the last benzylic hydroxylation to convert penitrem B to prenitrem E and penitrem F to penitrem A. In Penicillium ochrochloron, this protein is FAD-dependent monooxygenase ptmM.